A 254-amino-acid chain; its full sequence is Type III pantothenate kinase (254 aa).

ATP is bound at residue 6 to 13 (DVGNTNTV). Substrate-binding positions include Tyr-100 and 107 to 110 (GADR). The active-site Proton acceptor is the Asp-109. Asp-129 serves as a coordination point for K(+). An ATP-binding site is contributed by Thr-132. Residue Thr-184 coordinates substrate.

The protein belongs to the type III pantothenate kinase family. In terms of assembly, homodimer. NH4(+) serves as cofactor. K(+) is required as a cofactor.

It localises to the cytoplasm. It catalyses the reaction (R)-pantothenate + ATP = (R)-4'-phosphopantothenate + ADP + H(+). Its pathway is cofactor biosynthesis; coenzyme A biosynthesis; CoA from (R)-pantothenate: step 1/5. Functionally, catalyzes the phosphorylation of pantothenate (Pan), the first step in CoA biosynthesis. This chain is Type III pantothenate kinase, found in Anaeromyxobacter sp. (strain Fw109-5).